Consider the following 190-residue polypeptide: Cell division protein SepF (190 aa).

This sequence belongs to the SepF family. Homodimer. Interacts with FtsZ.

Its subcellular location is the cytoplasm. Its function is as follows. Cell division protein that is part of the divisome complex and is recruited early to the Z-ring. Probably stimulates Z-ring formation, perhaps through the cross-linking of FtsZ protofilaments. Its function overlaps with FtsA. This is Cell division protein SepF from Synechococcus sp. (strain WH7803).